We begin with the raw amino-acid sequence, 154 residues long: MHCPFCGANDTKVIDSRLVAEGEQVRRRRECVACGERFTTFETAELVLPRLIKQDGTRQPFDEDKLRAGMQRALEKRPVSIERLEAALAHIKSRLRATGEREVKSLVVGEMVMAELRKLDEVAYIRFASVYRRFQDLDEFREEIDRLAREPAKE.

The segment at 3 to 34 (CPFCGANDTKVIDSRLVAEGEQVRRRRECVAC) is a zinc-finger region. Residues 49–139 (PRLIKQDGTR…VYRRFQDLDE (91 aa)) enclose the ATP-cone domain.

This sequence belongs to the NrdR family. Zn(2+) serves as cofactor.

Its function is as follows. Negatively regulates transcription of bacterial ribonucleotide reductase nrd genes and operons by binding to NrdR-boxes. The chain is Transcriptional repressor NrdR from Pseudomonas entomophila (strain L48).